The chain runs to 184 residues: ATP synthase subunit b (184 aa).

Residues 25–45 (IFPSWPIMLATLVSFTILLVV) traverse the membrane as a helical segment.

This sequence belongs to the ATPase B chain family. In terms of assembly, F-type ATPases have 2 components, F(1) - the catalytic core - and F(0) - the membrane proton channel. F(1) has five subunits: alpha(3), beta(3), gamma(1), delta(1), epsilon(1). F(0) has three main subunits: a(1), b(2) and c(10-14). The alpha and beta chains form an alternating ring which encloses part of the gamma chain. F(1) is attached to F(0) by a central stalk formed by the gamma and epsilon chains, while a peripheral stalk is formed by the delta and b chains.

Its subcellular location is the cell membrane. Its function is as follows. F(1)F(0) ATP synthase produces ATP from ADP in the presence of a proton or sodium gradient. F-type ATPases consist of two structural domains, F(1) containing the extramembraneous catalytic core and F(0) containing the membrane proton channel, linked together by a central stalk and a peripheral stalk. During catalysis, ATP synthesis in the catalytic domain of F(1) is coupled via a rotary mechanism of the central stalk subunits to proton translocation. In terms of biological role, component of the F(0) channel, it forms part of the peripheral stalk, linking F(1) to F(0). In Mycoplasma mobile (strain ATCC 43663 / 163K / NCTC 11711) (Mesomycoplasma mobile), this protein is ATP synthase subunit b.